The primary structure comprises 85 residues: Large ribosomal subunit protein bL27 (85 aa).

It belongs to the bacterial ribosomal protein bL27 family.

The polypeptide is Large ribosomal subunit protein bL27 (Pseudomonas aeruginosa (strain LESB58)).